The following is a 99-amino-acid chain: MTTLSTKQKQFLKGLAHHLNPVVMLGGNGLTEGVLAEIENALNHHELIKVKVAGADRETKQLIINAIVRETKAAQVQTIGHILVLYRPSEEAKIQLPRK.

In terms of domain architecture, CRM spans 2–98 (TTLSTKQKQF…SEEAKIQLPR (97 aa)).

The sequence is that of RNA-binding protein HI_1333 from Haemophilus influenzae (strain ATCC 51907 / DSM 11121 / KW20 / Rd).